The sequence spans 377 residues: Chaperone protein DnaJ (377 aa).

The region spanning 4-69 (DYYEALGVTR…QKRAAYDRFG (66 aa)) is the J domain. The segment at 135-213 (GKTAQIRVPT…CHGQGRVTQE (79 aa)) adopts a CR-type zinc-finger fold. 8 residues coordinate Zn(2+): cysteine 148, cysteine 151, cysteine 165, cysteine 168, cysteine 187, cysteine 190, cysteine 201, and cysteine 204. CXXCXGXG motif repeat units lie at residues 148-155 (CDECSGSG), 165-172 (CTMCSGSG), 187-194 (CPGCNGRG), and 201-208 (CEKCHGQG).

The protein belongs to the DnaJ family. Homodimer. The cofactor is Zn(2+).

Its subcellular location is the cytoplasm. In terms of biological role, participates actively in the response to hyperosmotic and heat shock by preventing the aggregation of stress-denatured proteins and by disaggregating proteins, also in an autonomous, DnaK-independent fashion. Unfolded proteins bind initially to DnaJ; upon interaction with the DnaJ-bound protein, DnaK hydrolyzes its bound ATP, resulting in the formation of a stable complex. GrpE releases ADP from DnaK; ATP binding to DnaK triggers the release of the substrate protein, thus completing the reaction cycle. Several rounds of ATP-dependent interactions between DnaJ, DnaK and GrpE are required for fully efficient folding. Also involved, together with DnaK and GrpE, in the DNA replication of plasmids through activation of initiation proteins. This chain is Chaperone protein DnaJ, found in Brucella canis (strain ATCC 23365 / NCTC 10854 / RM-666).